The following is a 373-amino-acid chain: Chaperone protein DnaJ (373 aa).

The J domain occupies 4–68 (DFYEILGVSR…QARANYDRFG (65 aa)). The CR-type zinc-finger motif lies at 132–214 (GGEKEIRINH…CGGQGHIQVS (83 aa)). The Zn(2+) site is built by Cys145, Cys148, Cys162, Cys165, Cys188, Cys191, Cys202, and Cys205. CXXCXGXG motif repeat units follow at residues 145 to 152 (CKTCQGTG), 162 to 169 (CSTCGGVG), 188 to 195 (CPTCGGSG), and 202 to 209 (CESCGGQG).

It belongs to the DnaJ family. As to quaternary structure, homodimer. The cofactor is Zn(2+).

It is found in the cytoplasm. Its function is as follows. Participates actively in the response to hyperosmotic and heat shock by preventing the aggregation of stress-denatured proteins and by disaggregating proteins, also in an autonomous, DnaK-independent fashion. Unfolded proteins bind initially to DnaJ; upon interaction with the DnaJ-bound protein, DnaK hydrolyzes its bound ATP, resulting in the formation of a stable complex. GrpE releases ADP from DnaK; ATP binding to DnaK triggers the release of the substrate protein, thus completing the reaction cycle. Several rounds of ATP-dependent interactions between DnaJ, DnaK and GrpE are required for fully efficient folding. Also involved, together with DnaK and GrpE, in the DNA replication of plasmids through activation of initiation proteins. In Thermosynechococcus vestitus (strain NIES-2133 / IAM M-273 / BP-1), this protein is Chaperone protein DnaJ.